We begin with the raw amino-acid sequence, 138 residues long: Acidic phospholipase A2 5 (138 aa).

The N-terminal stretch at 1-16 (MRTLWIVAVWLIGVEG) is a signal peptide. 7 disulfide bridges follow: C42-C131, C44-C60, C59-C111, C65-C138, C66-C104, C73-C97, and C91-C102. 3 residues coordinate Ca(2+): Y43, G45, and G47. H63 is a catalytic residue. D64 lines the Ca(2+) pocket. D105 is an active-site residue.

It belongs to the phospholipase A2 family. Group II subfamily. D49 sub-subfamily. It depends on Ca(2+) as a cofactor. Expressed by the venom gland.

The protein localises to the secreted. It carries out the reaction a 1,2-diacyl-sn-glycero-3-phosphocholine + H2O = a 1-acyl-sn-glycero-3-phosphocholine + a fatty acid + H(+). Its function is as follows. PLA2 catalyzes the calcium-dependent hydrolysis of the 2-acyl groups in 3-sn-phosphoglycerides. The protein is Acidic phospholipase A2 5 of Echis ocellatus (Ocellated saw-scaled viper).